The following is a 745-amino-acid chain: Copper-transporting ATPase (745 aa).

The HMA domain maps to 1 to 67; sequence MKESFYIEGM…LIEKLGYSPK (67 aa). The Cytoplasmic portion of the chain corresponds to 1–83; sequence MKESFYIEGM…KKEFFSPNVK (83 aa). Cu cation contacts are provided by Cys-12 and Cys-15. Residues 84-104 form a helical membrane-spanning segment; it reads LALAVIFTLFVVYLSMGAMLS. The Extracellular segment spans residues 105-124; the sequence is PSLLPESLLAINNHSNFLNA. The chain crosses the membrane as a helical span at residues 125-144; sequence CLQLIGALIVMHLGRDFYIQ. At 145–151 the chain is on the cytoplasmic side; sequence GFKALWH. Residues 152–172 form a helical membrane-spanning segment; it reads RQPNMSSLIAIGTSAALISSL. Residues 173-194 lie on the Extracellular side of the membrane; the sequence is WQLYLVYTNHYTDQWSYGHYYF. Residues 195–215 traverse the membrane as a helical segment; the sequence is ESVCVILMFVMVGKRIENVSK. Residues 216 to 343 are Cytoplasmic-facing; the sequence is DKALDAMQAL…KAEISRLADK (128 aa). A helical membrane pass occupies residues 344 to 366; it reads VSSVFVPSVIAIAILAFVVWLII. The Extracellular portion of the chain corresponds to 367 to 379; the sequence is APKPDFWWNFGIA. The helical transmembrane segment at 380–397 threads the bilayer; sequence LEVFVSVLVISCPCALGL. Residues 398–685 lie on the Cytoplasmic side of the membrane; the sequence is ATPMSILVAN…KLSQATIKNI (288 aa). Asp-435 acts as the 4-aspartylphosphate intermediate in catalysis. Residues Asp-631 and Asp-635 each coordinate Mg(2+). Residues 686-705 traverse the membrane as a helical segment; it reads KENLFWAFCYNSVFIPLACG. At 706–716 the chain is on the extracellular side; it reads VLYKANIMLSP. The helical transmembrane segment at 717–735 threads the bilayer; it reads AIAGLAMSLSSVSVVLNSQ. At 736–745 the chain is on the cytoplasmic side; the sequence is RLRNFKIKDH.

Belongs to the cation transport ATPase (P-type) (TC 3.A.3) family. Type IB subfamily.

It is found in the cell membrane. The catalysed reaction is Cu(2+)(in) + ATP + H2O = Cu(2+)(out) + ADP + phosphate + H(+). Its function is as follows. Probably involved in copper export. This is Copper-transporting ATPase (copA) from Helicobacter pylori (Campylobacter pylori).